Reading from the N-terminus, the 339-residue chain is Nitrilase (339 aa).

A CN hydrolase domain is found at 7–277 (YRVAAVQASP…EGITYADIDL (271 aa)). The Proton acceptor role is filled by E47. The active-site Proton donor is the K128. C162 functions as the Nucleophile in the catalytic mechanism.

The protein belongs to the carbon-nitrogen hydrolase superfamily. Nitrilase family.

It catalyses the reaction a nitrile + 2 H2O = a carboxylate + NH4(+). This is Nitrilase (nit) from Bacillus sp. (strain OxB-1).